A 388-amino-acid chain; its full sequence is MIKNPKVLILTAHYGNGHVQVAKTLEQTFRQKGIKDVIVCDLFGESHPVITDITKYLYLKSYTIGKELYRLFYYGVEKIYDKKIASWYANFGRKRLKLLLQAEKPDIVINTFPIIAVPELKKQTGISIPVYNVLTDFCVHKIWIHREVDRYFVATDHVKKVMVDIGVPAEQIVETGIPIRSSFELKINPDIIYNKYQLCKNKKILLIVAGAHGVLGSVKELCQSFMSVPDLQVVVVCGKNEALKQDLVGVQETNPDALKVFGYVENIDELFRVTSCMITKPGGITLSEAAALQVPVILYKPVPGQENENAMYFERKGAAVVIRDDSEVFAKTEALLQDDMKLLQMKEAMKSIYRPEPADHIVDTILAENHVEPNHIPIKSPALAQSFT.

The protein belongs to the glycosyltransferase 28 family. UgtP subfamily.

It is found in the cell membrane. The catalysed reaction is a 1,2-diacyl-3-O-(beta-D-glucopyranosyl)-sn-glycerol + UDP-alpha-D-glucose = a 1,2-diacyl-3-O-(beta-D-Glc-(1-&gt;6)-beta-D-Glc)-sn-glycerol + UDP + H(+). It catalyses the reaction a 1,2-diacyl-3-O-(beta-D-Glc-(1-&gt;6)-beta-D-Glc)-sn-glycerol + UDP-alpha-D-glucose = a 1,2-diacyl-3-O-(beta-D-Glc-(1-&gt;6)-beta-D-Glc-(1-&gt;6)-beta-D-Glc)-sn-glycerol + UDP + H(+). It carries out the reaction a 1,2-diacyl-sn-glycerol + UDP-alpha-D-glucose = a 1,2-diacyl-3-O-(beta-D-glucopyranosyl)-sn-glycerol + UDP + H(+). It participates in glycolipid metabolism; diglucosyl-diacylglycerol biosynthesis. Its function is as follows. Processive glucosyltransferase involved in the biosynthesis of both the bilayer- and non-bilayer-forming membrane glucolipids. Is able to successively transfer up to three glucosyl residues to diacylglycerol (DAG), thereby catalyzing the formation of beta-monoglucosyl-DAG (3-O-(beta-D-glucopyranosyl)-1,2-diacyl-sn-glycerol), beta-diglucosyl-DAG (3-O-(beta-D-glucopyranosyl-beta-(1-&gt;6)-D-glucopyranosyl)-1,2-diacyl-sn-glycerol) and beta-triglucosyl-DAG (3-O-(beta-D-glucopyranosyl-beta-(1-&gt;6)-D-glucopyranosyl-beta-(1-&gt;6)-D-glucopyranosyl)-1,2-diacyl-sn-glycerol). Beta-diglucosyl-DAG is the predominant glycolipid found in Bacillales and is also used as a membrane anchor for lipoteichoic acid (LTA). This Bacillus anthracis (strain A0248) protein is Processive diacylglycerol beta-glucosyltransferase.